The primary structure comprises 274 residues: NADPH-dependent 7-cyano-7-deazaguanine reductase (274 aa).

A substrate-binding site is contributed by 80–82 (VES). 82-83 (SK) is a binding site for NADPH. The active-site Thioimide intermediate is Cys181. Asp188 serves as the catalytic Proton donor. Residue 220 to 221 (HE) participates in substrate binding. 249–250 (RG) is an NADPH binding site.

Belongs to the GTP cyclohydrolase I family. QueF type 2 subfamily. As to quaternary structure, homodimer.

It localises to the cytoplasm. The catalysed reaction is 7-aminomethyl-7-carbaguanine + 2 NADP(+) = 7-cyano-7-deazaguanine + 2 NADPH + 3 H(+). It participates in tRNA modification; tRNA-queuosine biosynthesis. Catalyzes the NADPH-dependent reduction of 7-cyano-7-deazaguanine (preQ0) to 7-aminomethyl-7-deazaguanine (preQ1). This Burkholderia pseudomallei (strain 1106a) protein is NADPH-dependent 7-cyano-7-deazaguanine reductase.